A 63-amino-acid chain; its full sequence is Large ribosomal subunit protein uL29 (63 aa).

The protein belongs to the universal ribosomal protein uL29 family.

The sequence is that of Large ribosomal subunit protein uL29 from Chromohalobacter salexigens (strain ATCC BAA-138 / DSM 3043 / CIP 106854 / NCIMB 13768 / 1H11).